Here is a 215-residue protein sequence, read N- to C-terminus: 3-isopropylmalate dehydratase small subunit (215 aa).

Belongs to the LeuD family. LeuD type 1 subfamily. Heterodimer of LeuC and LeuD.

It catalyses the reaction (2R,3S)-3-isopropylmalate = (2S)-2-isopropylmalate. It participates in amino-acid biosynthesis; L-leucine biosynthesis; L-leucine from 3-methyl-2-oxobutanoate: step 2/4. Its function is as follows. Catalyzes the isomerization between 2-isopropylmalate and 3-isopropylmalate, via the formation of 2-isopropylmaleate. This Acinetobacter baumannii (strain AB307-0294) protein is 3-isopropylmalate dehydratase small subunit.